The chain runs to 316 residues: Coproporphyrin III ferrochelatase (316 aa).

Fe-coproporphyrin III-binding positions include tyrosine 13, arginine 30, 46 to 47 (RY), serine 54, and tyrosine 125. 2 residues coordinate Fe(2+): histidine 183 and glutamate 264.

It belongs to the ferrochelatase family.

The protein localises to the cytoplasm. It catalyses the reaction Fe-coproporphyrin III + 2 H(+) = coproporphyrin III + Fe(2+). It functions in the pathway porphyrin-containing compound metabolism; protoheme biosynthesis. In terms of biological role, involved in coproporphyrin-dependent heme b biosynthesis. Catalyzes the insertion of ferrous iron into coproporphyrin III to form Fe-coproporphyrin III. This is Coproporphyrin III ferrochelatase from Geobacillus thermodenitrificans (strain NG80-2).